A 156-amino-acid chain; its full sequence is Small ribosomal subunit protein uS7 (156 aa).

The protein belongs to the universal ribosomal protein uS7 family. In terms of assembly, part of the 30S ribosomal subunit. Contacts proteins S9 and S11.

One of the primary rRNA binding proteins, it binds directly to 16S rRNA where it nucleates assembly of the head domain of the 30S subunit. Is located at the subunit interface close to the decoding center, probably blocks exit of the E-site tRNA. The chain is Small ribosomal subunit protein uS7 from Methylibium petroleiphilum (strain ATCC BAA-1232 / LMG 22953 / PM1).